We begin with the raw amino-acid sequence, 173 residues long: Ribosome maturation factor RimM (173 aa).

Positions 94-168 (SNESYLCDLL…LIRINPPKGL (75 aa)) constitute a PRC barrel domain.

Belongs to the RimM family. In terms of assembly, binds ribosomal protein uS19.

The protein resides in the cytoplasm. Its function is as follows. An accessory protein needed during the final step in the assembly of 30S ribosomal subunit, possibly for assembly of the head region. Essential for efficient processing of 16S rRNA. May be needed both before and after RbfA during the maturation of 16S rRNA. It has affinity for free ribosomal 30S subunits but not for 70S ribosomes. This chain is Ribosome maturation factor RimM, found in Lawsonia intracellularis (strain PHE/MN1-00).